Here is a 207-residue protein sequence, read N- to C-terminus: Holliday junction branch migration complex subunit RuvA (207 aa).

Residues M1 to E63 are domain I. The domain II stretch occupies residues S64–E142. The segment at P143–E154 is flexible linker. Positions V155–N207 are domain III.

The protein belongs to the RuvA family. Homotetramer. Forms an RuvA(8)-RuvB(12)-Holliday junction (HJ) complex. HJ DNA is sandwiched between 2 RuvA tetramers; dsDNA enters through RuvA and exits via RuvB. An RuvB hexamer assembles on each DNA strand where it exits the tetramer. Each RuvB hexamer is contacted by two RuvA subunits (via domain III) on 2 adjacent RuvB subunits; this complex drives branch migration. In the full resolvosome a probable DNA-RuvA(4)-RuvB(12)-RuvC(2) complex forms which resolves the HJ.

It localises to the cytoplasm. In terms of biological role, the RuvA-RuvB-RuvC complex processes Holliday junction (HJ) DNA during genetic recombination and DNA repair, while the RuvA-RuvB complex plays an important role in the rescue of blocked DNA replication forks via replication fork reversal (RFR). RuvA specifically binds to HJ cruciform DNA, conferring on it an open structure. The RuvB hexamer acts as an ATP-dependent pump, pulling dsDNA into and through the RuvAB complex. HJ branch migration allows RuvC to scan DNA until it finds its consensus sequence, where it cleaves and resolves the cruciform DNA. This is Holliday junction branch migration complex subunit RuvA from Corynebacterium kroppenstedtii (strain DSM 44385 / JCM 11950 / CIP 105744 / CCUG 35717).